The primary structure comprises 216 residues: Small ribosomal subunit protein uS2 (216 aa).

The protein belongs to the universal ribosomal protein uS2 family.

This chain is Small ribosomal subunit protein uS2, found in Carsonella ruddii (strain PV).